Consider the following 389-residue polypeptide: tRNA (cytosine(72)-C(5))-methyltransferase (389 aa).

A PUA domain is found at 92-167 (LPVVVANKYA…LAVEVTLPKF (76 aa)). S-adenosyl-L-methionine is bound by residues 209–215 (AAAPGGK), Asp233, Arg238, Asp260, Asp277, and Tyr304. Cys327 acts as the Nucleophile in catalysis.

The protein belongs to the class I-like SAM-binding methyltransferase superfamily. RsmB/NOP family.

The catalysed reaction is cytidine(72) in tRNA + S-adenosyl-L-methionine = 5-methylcytidine(72) in tRNA + S-adenosyl-L-homocysteine + H(+). The enzyme catalyses cytidine(72) in tRNA(Thr) + S-adenosyl-L-methionine = 5-methylcytidine(72) in tRNA(Thr) + S-adenosyl-L-homocysteine + H(+). It catalyses the reaction cytidine(72) in tRNA(Cys) + S-adenosyl-L-methionine = 5-methylcytidine(72) in tRNA(Cys) + S-adenosyl-L-homocysteine + H(+). Functionally, S-adenosyl-L-methionine-dependent methyltransferase that specifically methylates the C5 position of cytosine 72 in several tRNAs. This modification appears to slightly promote the thermal stability of P.horikoshii tRNAs, but does not affect their amino acid accepting activity. Four elements in the acceptor stems of tRNAs are essential for substrate recognition by this enzyme: the target site C72, the 3'-CCA terminus, U73 or G73, and the second base pair C2:G71. In Pyrococcus horikoshii (strain ATCC 700860 / DSM 12428 / JCM 9974 / NBRC 100139 / OT-3), this protein is tRNA (cytosine(72)-C(5))-methyltransferase.